The sequence spans 558 residues: Chaperonin GroEL 1 (558 aa).

ATP-binding positions include 29–32 (TLGP), 86–90 (DGTTT), Gly413, and Asp494.

Belongs to the chaperonin (HSP60) family. Forms a cylinder of 14 subunits composed of two heptameric rings stacked back-to-back. Interacts with the co-chaperonin GroES.

It is found in the cytoplasm. The enzyme catalyses ATP + H2O + a folded polypeptide = ADP + phosphate + an unfolded polypeptide.. In terms of biological role, together with its co-chaperonin GroES, plays an essential role in assisting protein folding. The GroEL-GroES system forms a nano-cage that allows encapsulation of the non-native substrate proteins and provides a physical environment optimized to promote and accelerate protein folding. The chain is Chaperonin GroEL 1 from Acaryochloris marina (strain MBIC 11017).